The primary structure comprises 168 residues: Transcription antitermination protein NusB (168 aa).

It belongs to the NusB family.

In terms of biological role, involved in transcription antitermination. Required for transcription of ribosomal RNA (rRNA) genes. Binds specifically to the boxA antiterminator sequence of the ribosomal RNA (rrn) operons. The polypeptide is Transcription antitermination protein NusB (Chlamydia trachomatis serovar L2 (strain ATCC VR-902B / DSM 19102 / 434/Bu)).